The sequence spans 129 residues: uncharacterized protein (129 aa).

Topologically, residues 1–28 (MAGTLFIILRFVDTTLPSSRVYCVRSLE) are cytoplasmic. The helical transmembrane segment at 29–49 (VSVAVELAAATVLAFESIGVV) threads the bilayer. Residues 50–54 (DDCGR) lie on the Extracellular side of the membrane. A helical transmembrane segment spans residues 55-75 (SVLFSIILIAAFICSVFLIAS). Residues 76–129 (EDIAGSRRSTGSCVTLWEGRNISFCLYRSNWLNTVPVGYMFFLRKNRSLDERYF) lie on the Cytoplasmic side of the membrane.

It is found in the membrane. This is an uncharacterized protein from Saccharomyces cerevisiae (strain ATCC 204508 / S288c) (Baker's yeast).